A 64-amino-acid chain; its full sequence is Peptide Ctri9677 (64 aa).

The signal sequence occupies residues 1–22 (MKNNTILFTFLIVFLIASQIEA). The residue at position 36 (Leu36) is a Leucine amide. A propeptide spanning residues 40–64 (SEDREFFDFFTDDNLAALEKALKEY) is cleaved from the precursor.

It belongs to the non-disulfide-bridged peptide (NDBP) superfamily. Short antimicrobial peptide (group 4) family. Expressed by the venom gland.

The protein localises to the secreted. Functionally, antimicrobial peptide. The sequence is that of Peptide Ctri9677 from Chaerilus tricostatus (Scorpion).